Reading from the N-terminus, the 313-residue chain is Ribosomal RNA small subunit methyltransferase H (313 aa).

S-adenosyl-L-methionine contacts are provided by residues 34–36 (GGH), D53, F80, D101, and Q108.

This sequence belongs to the methyltransferase superfamily. RsmH family.

It is found in the cytoplasm. It carries out the reaction cytidine(1402) in 16S rRNA + S-adenosyl-L-methionine = N(4)-methylcytidine(1402) in 16S rRNA + S-adenosyl-L-homocysteine + H(+). In terms of biological role, specifically methylates the N4 position of cytidine in position 1402 (C1402) of 16S rRNA. The chain is Ribosomal RNA small subunit methyltransferase H from Lacticaseibacillus casei (strain BL23) (Lactobacillus casei).